The sequence spans 361 residues: NAD(P)H-quinone oxidoreductase subunit 1, chloroplastic (361 aa).

7 helical membrane-spanning segments follow: residues 28 to 48, 99 to 119, 128 to 148, 249 to 269, 270 to 290, 301 to 321, and 341 to 361; these read IWVLIPILTLVLGITLGVLVI, FTIGPSIAVISILLSYSVIPF, LSIGVFLWIAVSSLAPIGLLM, YSGIKFGLFYVASYLNLLVSS, LFVTVLYLGGWNLSIPYLFVP, TIICIFITLAKTYLFLFISIA, and FLLPISLGNLLLTTSFQLLSL.

It belongs to the complex I subunit 1 family. NDH is composed of at least 16 different subunits, 5 of which are encoded in the nucleus.

The protein localises to the plastid. Its subcellular location is the chloroplast thylakoid membrane. It catalyses the reaction a plastoquinone + NADH + (n+1) H(+)(in) = a plastoquinol + NAD(+) + n H(+)(out). The enzyme catalyses a plastoquinone + NADPH + (n+1) H(+)(in) = a plastoquinol + NADP(+) + n H(+)(out). Its function is as follows. NDH shuttles electrons from NAD(P)H:plastoquinone, via FMN and iron-sulfur (Fe-S) centers, to quinones in the photosynthetic chain and possibly in a chloroplast respiratory chain. The immediate electron acceptor for the enzyme in this species is believed to be plastoquinone. Couples the redox reaction to proton translocation, and thus conserves the redox energy in a proton gradient. This Jasminum nudiflorum (Winter jasmine) protein is NAD(P)H-quinone oxidoreductase subunit 1, chloroplastic.